The chain runs to 166 residues: SsrA-binding protein (166 aa).

The segment at 146-166 (KRAAEKEKQSKKDVKAAMERY) is disordered.

This sequence belongs to the SmpB family.

The protein resides in the cytoplasm. In terms of biological role, required for rescue of stalled ribosomes mediated by trans-translation. Binds to transfer-messenger RNA (tmRNA), required for stable association of tmRNA with ribosomes. tmRNA and SmpB together mimic tRNA shape, replacing the anticodon stem-loop with SmpB. tmRNA is encoded by the ssrA gene; the 2 termini fold to resemble tRNA(Ala) and it encodes a 'tag peptide', a short internal open reading frame. During trans-translation Ala-aminoacylated tmRNA acts like a tRNA, entering the A-site of stalled ribosomes, displacing the stalled mRNA. The ribosome then switches to translate the ORF on the tmRNA; the nascent peptide is terminated with the 'tag peptide' encoded by the tmRNA and targeted for degradation. The ribosome is freed to recommence translation, which seems to be the essential function of trans-translation. This is SsrA-binding protein from Synechococcus sp. (strain CC9605).